A 54-amino-acid polypeptide reads, in one-letter code: Large ribosomal subunit protein bL33 (54 aa).

It belongs to the bacterial ribosomal protein bL33 family.

The protein is Large ribosomal subunit protein bL33 of Corynebacterium diphtheriae (strain ATCC 700971 / NCTC 13129 / Biotype gravis).